The primary structure comprises 203 residues: Histidine biosynthesis bifunctional protein HisIE (203 aa).

Residues 1 to 114 (MLTEQQRREL…FGDTAHQWLF (114 aa)) form a phosphoribosyl-AMP cyclohydrolase region. Residues 115 to 203 (LYQLEQLLAE…VIENLRKRHQ (89 aa)) are phosphoribosyl-ATP pyrophosphohydrolase.

It in the N-terminal section; belongs to the PRA-CH family. In the C-terminal section; belongs to the PRA-PH family.

Its subcellular location is the cytoplasm. It carries out the reaction 1-(5-phospho-beta-D-ribosyl)-ATP + H2O = 1-(5-phospho-beta-D-ribosyl)-5'-AMP + diphosphate + H(+). The enzyme catalyses 1-(5-phospho-beta-D-ribosyl)-5'-AMP + H2O = 1-(5-phospho-beta-D-ribosyl)-5-[(5-phospho-beta-D-ribosylamino)methylideneamino]imidazole-4-carboxamide. The protein operates within amino-acid biosynthesis; L-histidine biosynthesis; L-histidine from 5-phospho-alpha-D-ribose 1-diphosphate: step 2/9. It participates in amino-acid biosynthesis; L-histidine biosynthesis; L-histidine from 5-phospho-alpha-D-ribose 1-diphosphate: step 3/9. This chain is Histidine biosynthesis bifunctional protein HisIE, found in Escherichia coli O6:H1 (strain CFT073 / ATCC 700928 / UPEC).